The sequence spans 165 residues: ISVCDLPADRGQCTAYIPQWFFNKTTEDCEKFVYGGCQGNANRFETKDDCIANCGCNLPSKVGPCRVSARMWFHNPETEKCEVFIYGGCHGNANRFATETECQEVCDRYQKPGFCYQPSETGPCKGSFPRYYYDYEDGECKEFIYGGCEGNANNFETKESCENAC.

A protein-binding residues include I1 and S2. Residues 1–2 form an inserts into the active site groove of a carboxypeptidase and inhibits activity by emulating a C-terminal substrate region; it reads IS. 2 consecutive BPTI/Kunitz inhibitor domains span residues 4 to 54 and 56 to 106; these read CDLP…IANC and CNLP…QEVC. 6 disulfide bridges follow: C4/C54, C13/C37, C29/C50, C56/C106, C65/C89, and C81/C102. An N-linked (GlcNAc...) asparagine glycan is attached at N23. Y109, Q110, K111, and G113 together coordinate a protein. Positions 115–165 constitute a BPTI/Kunitz inhibitor 3 domain; it reads CYQPSETGPCKGSFPRYYYDYEDGECKEFIYGGCEGNANNFETKESCENAC. 3 disulfide bridges follow: C115-C165, C124-C148, and C140-C161.

Contains 9 disulfide bonds. In terms of tissue distribution, expressed in the tentacle crown. Not detected in annelid body.

Its function is as follows. Potent inhibitor of pancreatic carboxypeptidase A with a Ki of 27 nM, and of the serine proteases trypsin, chymotrypsin and pancreatic elastase, with Ki values of 6.9 nM, 1.83 nM and 4 nM, respectively. Also inhibits carboxypeptidase A4 CPA4 and CPA1. Does not inhibit cysteine and aspartic proteases. In Sabellastarte magnifica (Feather duster), this protein is Carboxypeptidase inhibitor SmCI.